Here is a 370-residue protein sequence, read N- to C-terminus: tRNA-specific 2-thiouridylase MnmA (370 aa).

Residues 9-16 (GLSGGVDS) and M35 contribute to the ATP site. The segment at 95-97 (NPD) is interaction with target base in tRNA. The Nucleophile role is filled by C100. A disulfide bond links C100 and C198. G124 is a binding site for ATP. Residues 148-150 (KDQ) form an interaction with tRNA region. C198 acts as the Cysteine persulfide intermediate in catalysis. The interval 316 to 317 (RY) is interaction with tRNA.

Belongs to the MnmA/TRMU family.

It localises to the cytoplasm. The catalysed reaction is S-sulfanyl-L-cysteinyl-[protein] + uridine(34) in tRNA + AH2 + ATP = 2-thiouridine(34) in tRNA + L-cysteinyl-[protein] + A + AMP + diphosphate + H(+). Its function is as follows. Catalyzes the 2-thiolation of uridine at the wobble position (U34) of tRNA, leading to the formation of s(2)U34. The protein is tRNA-specific 2-thiouridylase MnmA of Acidovorax ebreus (strain TPSY) (Diaphorobacter sp. (strain TPSY)).